A 692-amino-acid chain; its full sequence is MYLSIIILPLLGSIVSGFFGRKVGVTGSRILGCLSIITTTILAIISFFEVGFNNNPISINLFKWLDSESFNMVWNFQFDSLTVSMLIPVLVISSLVHFYSIGYMSHDPHSQRFFSYLSLFTFMMIILVTGNNYLLMFVGWEGVGVCSYLLVSFWFTRIAANQSSLSAFLTNRVGDCFLTIGMFVILWSLGNLDYSTVFSLAPYINENIITIIGICLLIGAMAKSSQVGLHIWLPMAMEGPTPVSALIHAATMVTAGVYLLIRSSPLIEYSSTVLLICLWLGAVTTVFSSLIGLFQQDIKKIIAYSTMSQLGMMVIAIGLSSYNVAIFHLINHAFYKGLLFLGAGAVIHAVVDNQDLRKYGGLISFLPLTYTVILIASLSLVAFPFMTGFFSKDFILESAYGQYHFSSINVYFIATIGAVFTTLYSVKVIYLTFLANPNGSVNYYKNAHEGDIFLSLPLVILAIFSIYFGYLTKDIYIGLGSGFFIDNSIFIHPMREILIDTEFGVPTIFKLLPFFLTIFFSVLSIVYYEYMPKVVVDFNLTNLGYYIYGFFNQRFLVEFFYNKYIVNTVLDLGGQTTKILDKGSVEWIGPYGFGIALVKASKTVSGLGKGVVTDYALYILIGACFYLSIFTFISIFFDLANSITLSCVLVLLGVNNYVKLNKNDNINENSLTSSFLWSNTKEMSKYTTKIII.

Helical transmembrane passes span 5–23 (IIIL…GRKV), 30–52 (ILGC…EVGF), 81–103 (LTVS…SIGY), 112–129 (RFFS…ILVT), 133–155 (YLLM…SFWF), 168–190 (FLTN…WSLG), 200–222 (LAPY…GAMA), 243–262 (VSAL…LLIR), 272–294 (TVLL…IGLF), 301–319 (IIAY…AIGL), 329–351 (LINH…HAVV), 364–386 (SFLP…FPFM), 409–431 (NVYF…VIYL), 452–471 (IFLS…FGYL), 511–528 (LLPF…IVYY), 535–557 (VVDF…RFLV), and 615–637 (YALY…SIFF).

The protein belongs to the complex I subunit 5 family.

The protein localises to the mitochondrion inner membrane. The catalysed reaction is a ubiquinone + NADH + 5 H(+)(in) = a ubiquinol + NAD(+) + 4 H(+)(out). Core subunit of the mitochondrial membrane respiratory chain NADH dehydrogenase (Complex I) that is believed to belong to the minimal assembly required for catalysis. Complex I functions in the transfer of electrons from NADH to the respiratory chain. The immediate electron acceptor for the enzyme is believed to be ubiquinone. The polypeptide is NADH-ubiquinone oxidoreductase chain 5 (nd5) (Hypocrea jecorina (Trichoderma reesei)).